The primary structure comprises 251 residues: Flap endonuclease Xni (251 aa).

Residues 51–72 (EDDRSDSWRHQSLPDYKAGRSP) are disordered. Residue D104 participates in Mg(2+) binding. Positions 160-249 (VLPHQLPDYW…LSGNLQQLRL (90 aa)) constitute a 5'-3' exonuclease domain. K(+)-binding residues include L171, A172, P180, V182, and I185. The segment at 184 to 189 (GIGAKT) is interaction with DNA.

Belongs to the Xni family. Mg(2+) serves as cofactor. Requires K(+) as cofactor.

In terms of biological role, has flap endonuclease activity. During DNA replication, flap endonucleases cleave the 5'-overhanging flap structure that is generated by displacement synthesis when DNA polymerase encounters the 5'-end of a downstream Okazaki fragment. In Yersinia enterocolitica serotype O:8 / biotype 1B (strain NCTC 13174 / 8081), this protein is Flap endonuclease Xni.